The sequence spans 163 residues: MVRVGLQISATLENVDKLETSHPDYSFFLKLKCSNCGEQSDKWHDITESERVQQDSRNAAGFNFFMKCKMCSRENSIDIVDKSNAPYTADDSGAFKTIVVFECRGAEPVEFSPRVGWRVSSAENGQQFEEVDLSEDDWVEYDQKNNNSVGIYEFASKFIKLKK.

4 residues coordinate Zn(2+): cysteine 33, cysteine 36, cysteine 68, and cysteine 71.

It belongs to the UPF0587 family.

The sequence is that of UPF0587 protein CG4646 from Drosophila melanogaster (Fruit fly).